A 348-amino-acid polypeptide reads, in one-letter code: Anthranilate phosphoribosyltransferase (348 aa).

5-phospho-alpha-D-ribose 1-diphosphate contacts are provided by residues Gly84, 87-88, Thr92, 94-97, 112-120, and Ser124; these read GD, NITT, and KHGNRSVSS. Gly84 contributes to the anthranilate binding site. Thr96 provides a ligand contact to Mg(2+). Asn115 contributes to the anthranilate binding site. Arg170 lines the anthranilate pocket. 2 residues coordinate Mg(2+): Asp228 and Glu229.

This sequence belongs to the anthranilate phosphoribosyltransferase family. In terms of assembly, homodimer. It depends on Mg(2+) as a cofactor.

It catalyses the reaction N-(5-phospho-beta-D-ribosyl)anthranilate + diphosphate = 5-phospho-alpha-D-ribose 1-diphosphate + anthranilate. It participates in amino-acid biosynthesis; L-tryptophan biosynthesis; L-tryptophan from chorismate: step 2/5. Functionally, catalyzes the transfer of the phosphoribosyl group of 5-phosphorylribose-1-pyrophosphate (PRPP) to anthranilate to yield N-(5'-phosphoribosyl)-anthranilate (PRA). This is Anthranilate phosphoribosyltransferase from Corynebacterium glutamicum (strain R).